The chain runs to 515 residues: MTDHTMKKNPVSIPHTVWYADDIRRGEREAADVLGLTLYELMLRAGEAAFQVCRSAYPDARHWLVLCGHGNNGGDGYVVARLAKAVGIEVTLLAQESDKPLPEEAALAREAWLNAGGEIHASNIVWPESVDLIVDALLGTGLRQAPRESISQLIDHANSHPAPIVAVDIPSGLLAETGATPGAVINADHTITFIALKPGLLTGKARDVTGQLHFDSLGLDSWLAGQETKIQRFSAEQLSHWLKPRRPTSHKGDHGRLVIIGGDHGTAGAIRMTGEAALRAGAGLVRVLTRSENIAPLLTARPELMVHELTMDSLTESLEWADVVVIGPGLGQQEWGKKALQKVENFRKPMLWDADALNLLAINPDKRHNRVITPHPGEAARLLGCSVAEIESDRLHCAKRLVQRYGGVAVLKGAGTVVAAHPDALGIIDAGNAGMASGGMGDVLSGIIGALLGQKLSPYDAACAGCVAHGAAADVLAARFGTRGMLATDLFSTLQRIVNPEVTDKNHDESSNSAP.

An NAD(P)H-hydrate epimerase region spans residues 1-227; it reads MTDHTMKKNP…GLDSWLAGQE (227 aa). Residues 23–225 enclose the YjeF N-terminal domain; sequence IRRGEREAAD…SLGLDSWLAG (203 aa). Positions 71 to 75 are NADPHX 1; for epimerase activity; it reads NNGGD. 2 residues coordinate K(+): Asn72 and Asp135. The interval 139 to 145 is NADPHX 1; for epimerase activity; that stretch reads GTGLRQA. (6S)-NADPHX is bound at residue Asp168. Ser171 lines the K(+) pocket. Positions 234–501 constitute a YjeF C-terminal domain; that stretch reads SAEQLSHWLK…STLQRIVNPE (268 aa). The interval 235 to 515 is ADP-dependent (S)-NAD(P)H-hydrate dehydratase; that stretch reads AEQLSHWLKP…NHDESSNSAP (281 aa). Gly329 serves as a coordination point for (6S)-NADPHX. Positions 375-381 are NADPHX 2; for dehydratase activity; the sequence is HPGEAAR. Residues 412–416 and 432–441 each bind ADP; these read KGAGT and NAGMASGGMG. A (6S)-NADPHX-binding site is contributed by Asp442.

The protein in the N-terminal section; belongs to the NnrE/AIBP family. It in the C-terminal section; belongs to the NnrD/CARKD family. It depends on K(+) as a cofactor.

The enzyme catalyses (6S)-NADHX + ADP = AMP + phosphate + NADH + H(+). The catalysed reaction is (6S)-NADPHX + ADP = AMP + phosphate + NADPH + H(+). It carries out the reaction (6R)-NADHX = (6S)-NADHX. It catalyses the reaction (6R)-NADPHX = (6S)-NADPHX. Bifunctional enzyme that catalyzes the epimerization of the S- and R-forms of NAD(P)HX and the dehydration of the S-form of NAD(P)HX at the expense of ADP, which is converted to AMP. This allows the repair of both epimers of NAD(P)HX, a damaged form of NAD(P)H that is a result of enzymatic or heat-dependent hydration. The sequence is that of Bifunctional NAD(P)H-hydrate repair enzyme Nnr (nnr) from Escherichia coli (strain K12).